The following is a 335-amino-acid chain: Methionine import ATP-binding protein MetN 1 (335 aa).

The region spanning 2 to 242 is the ABC transporter domain; it reads IEFQNVHKTY…PKHPTTRRFV (241 aa). 38 to 45 is an ATP binding site; the sequence is GHSGAGKS.

The protein belongs to the ABC transporter superfamily. Methionine importer (TC 3.A.1.24) family. As to quaternary structure, the complex is composed of two ATP-binding proteins (MetN), two transmembrane proteins (MetI) and a solute-binding protein (MetQ).

It is found in the cell inner membrane. The catalysed reaction is L-methionine(out) + ATP + H2O = L-methionine(in) + ADP + phosphate + H(+). It catalyses the reaction D-methionine(out) + ATP + H2O = D-methionine(in) + ADP + phosphate + H(+). Part of the ABC transporter complex MetNIQ involved in methionine import. Responsible for energy coupling to the transport system. In Pseudomonas fluorescens (strain ATCC BAA-477 / NRRL B-23932 / Pf-5), this protein is Methionine import ATP-binding protein MetN 1.